Reading from the N-terminus, the 471-residue chain is V-type ATP synthase beta chain (471 aa).

It belongs to the ATPase alpha/beta chains family.

In terms of biological role, produces ATP from ADP in the presence of a proton gradient across the membrane. The V-type beta chain is a regulatory subunit. This is V-type ATP synthase beta chain from Streptococcus pyogenes serotype M49 (strain NZ131).